Consider the following 928-residue polypeptide: Interphotoreceptor matrix proteoglycan 1 (928 aa).

Residues 1–20 form the signal peptide; sequence MHLKTGLIFLAICLALQVQG. The interval 26-50 is disordered; that stretch reads SKTNHGEAKQLADASGSDKTERTTK. Residues 29–49 show a composition bias toward basic and acidic residues; the sequence is NHGEAKQLADASGSDKTERTT. Asn-143 carries N-linked (GlcNAc...) asparagine glycosylation. A compositionally biased stretch (basic and acidic residues) spans 164-182; that stretch reads QERKDEISTDKTGGKKLED. A disordered region spans residues 164–191; the sequence is QERKDEISTDKTGGKKLEDIPSVSTGPP. 2 N-linked (GlcNAc...) asparagine glycosylation sites follow: Asn-203 and Asn-212. The region spanning 231–356 is the SEA 1 domain; sequence AEQMVEFSVT…TKLTVTDLQQ (126 aa). 2 disordered regions span residues 441 to 481 and 494 to 522; these read LSRE…TEDI and ALVS…NDLI. A compositionally biased stretch (basic and acidic residues) spans 466-477; that stretch reads PSREPPHDRSPD. In terms of domain architecture, SEA 2 spans 735–848; the sequence is KELVVFFSLR…YSLDIEPADQ (114 aa). Asn-756 and Asn-780 each carry an N-linked (GlcNAc...) asparagine glycan. A Heparin- and hyaluronan-binding motif is present at residues 785–793; that stretch reads KQLEILNFR. N-linked (GlcNAc...) asparagine glycans are attached at residues Asn-794 and Asn-812.

Highly glycosylated (N- and O-linked carbohydrates and sialic acid). In terms of tissue distribution, abundantly expressed in the retina (at protein level). Localizes to the photoreceptor layer of the interphotoreceptor matrix of the retina (at protein level).

The protein localises to the cell projection. It localises to the cilium. The protein resides in the photoreceptor outer segment. Its subcellular location is the secreted. It is found in the extracellular space. The protein localises to the extracellular matrix. It localises to the interphotoreceptor matrix. The protein resides in the photoreceptor inner segment. Chondroitin sulfate-, heparin- and hyaluronan-binding protein. May serve to form a basic macromolecular scaffold comprising the insoluble interphotoreceptor matrix. This chain is Interphotoreceptor matrix proteoglycan 1, found in Gallus gallus (Chicken).